The following is a 447-amino-acid chain: GTPase Der (447 aa).

EngA-type G domains lie at 3-167 (PVIA…FAQR) and 181-354 (IRLA…AAAM). Residues 9–16 (GRPNVGKS), 56–60 (DTGGF), 119–122 (NKAE), 187–194 (GRPNVGKS), 234–238 (DTAGI), and 299–302 (NKWD) contribute to the GTP site. Residues 355–439 (SNLSTPKLTR…PLRIELRSGK (85 aa)) form the KH-like domain.

It belongs to the TRAFAC class TrmE-Era-EngA-EngB-Septin-like GTPase superfamily. EngA (Der) GTPase family. As to quaternary structure, associates with the 50S ribosomal subunit.

GTPase that plays an essential role in the late steps of ribosome biogenesis. This Herminiimonas arsenicoxydans protein is GTPase Der.